Reading from the N-terminus, the 179-residue chain is uncharacterized protein (179 aa).

This is an uncharacterized protein from Methanocaldococcus jannaschii (strain ATCC 43067 / DSM 2661 / JAL-1 / JCM 10045 / NBRC 100440) (Methanococcus jannaschii).